The sequence spans 259 residues: Leucine-rich repeat-containing protein 3B (259 aa).

A signal peptide spans 1 to 33 (MNLVDLWLTRSLSMCLLLQSFVLMILCFHSASM). Residues 34–64 (CPKGCLCSSSGGLNVTCSNANLKEIPRDLPP) form the LRRNT domain. Asparagine 47 is a glycosylation site (N-linked (GlcNAc...) asparagine). LRR repeat units follow at residues 65-86 (ETVLLYLDSNQITSIPNEIFKD), 89-110 (QLRVLNLSKNGIEFIDEHAFKG), and 114-135 (TLQTLDLSDNRIQSVHKNAFNN). Asparagine 94 carries an N-linked (GlcNAc...) asparagine glycan. The region spanning 145-197 (NPWHCDCTLQQVLRSMASNHETAHNVICKTSVLDEHAGRPFLNAANDADLCNL) is the LRRCT domain. The helical transmembrane segment at 205–225 (AMLVTMFGWFTMVISYVVYYV) threads the bilayer.

Belongs to the LRRC3 family.

It is found in the membrane. This Homo sapiens (Human) protein is Leucine-rich repeat-containing protein 3B (LRRC3B).